The sequence spans 242 residues: Ribonuclease PH (242 aa).

Residues Arg-87 and 125–127 (GTR) each bind phosphate.

The protein belongs to the RNase PH family. As to quaternary structure, homohexameric ring arranged as a trimer of dimers.

The catalysed reaction is tRNA(n+1) + phosphate = tRNA(n) + a ribonucleoside 5'-diphosphate. In terms of biological role, phosphorolytic 3'-5' exoribonuclease that plays an important role in tRNA 3'-end maturation. Removes nucleotide residues following the 3'-CCA terminus of tRNAs; can also add nucleotides to the ends of RNA molecules by using nucleoside diphosphates as substrates, but this may not be physiologically important. Probably plays a role in initiation of 16S rRNA degradation (leading to ribosome degradation) during starvation. This chain is Ribonuclease PH, found in Thermosynechococcus vestitus (strain NIES-2133 / IAM M-273 / BP-1).